Here is a 430-residue protein sequence, read N- to C-terminus: T-kininogen 1 (430 aa).

Positions 1–18 are cleaved as a signal peptide; that stretch reads MKLITILLLCSRLLPSLA. Glutamine 19 is modified (pyrrolidone carboxylic acid). In terms of domain architecture, Cystatin kininogen-type 1 spans 28–131; the sequence is CNDETVFQAV…TQICNITPGK (104 aa). Intrachain disulfides connect cysteine 28–cysteine 404, cysteine 83–cysteine 94, cysteine 107–cysteine 125, cysteine 141–cysteine 144, cysteine 205–cysteine 217, cysteine 228–cysteine 247, cysteine 263–cysteine 266, cysteine 327–cysteine 339, and cysteine 350–cysteine 369. Residue asparagine 82 is glycosylated (N-linked (GlcNAc...) asparagine). In terms of domain architecture, Cystatin kininogen-type 2 spans 150 to 253; the sequence is MDSSDLKPVL…SQSCDLYPGD (104 aa). Asparagine 168 and asparagine 204 each carry an N-linked (GlcNAc...) asparagine glycan. The 104-residue stretch at 272–375 folds into the Cystatin kininogen-type 3 domain; that stretch reads VDSPELKEAL…TVRCQALDMM (104 aa). N-linked (GlcNAc...) asparagine glycosylation is present at asparagine 326. Residues 411 to 430 form a disordered region; that stretch reads SKARAGPAPDHQAEASTVTP.

In terms of processing, as T-kinin is preceded by a Met instead of an Arg or Lys, it is not released from its precursor by either tissue or plasma kallikrein. Plasma.

The protein resides in the secreted. It is found in the extracellular space. Its function is as follows. Kininogens are plasma glycoproteins with a number of functions: (1) as precursor of the active peptide bradykinin they effect smooth muscle contraction, induction of hypotension and increase of vascular permeability. (2) They play a role in blood coagulation by helping to position optimally prekallikrein and factor XI next to factor XII. (3) They are inhibitor of thiol proteases. The polypeptide is T-kininogen 1 (Map1) (Rattus norvegicus (Rat)).